The sequence spans 660 residues: MKLYCVGHSVSSPCLVLQFKQTNIMLDCGLDMSTVNQFTPLSLVNNEKFSQLKSWSSRELQEIEGFTAQNNLKEAGGRLFIDAEPEVCPPETGLIDFSMVDVILISNYHHMLALPFITEYSGFNGKIYATEPTIQIGRDLMLELVTFAERVPKRRNGNMWKNDNVIRCLPAPLNELANVKSWRVLYSKHDVKACISKIQAVSYSEKLDLCGILQLSAHSSGFCLGSSNWMLESEYEKISYLSPSSSFTTHPLPLNQTVLKNSDVLIITGVTEAPIDNPDAMLGEFCTHLASTLRAGGNVLVPCYPSGVLYDLFECLYTYLDNAKLGMVPIYFISPVADSSLAYSNIYGEWLCQSKQTKVYLPEPPFPHAELLKEARLKVFSNLHNGFSSSFKTPCVVFTGHPSLRYGDAVHFMEIWGKSGNNTVIFTEPDFPYLEALAPYQPLAMKTCYCPIDPRLNFAQANKLLKELQPRHLVMPESYSRPPVIHPHRTDLTIEDPGCSLTTFNHLDVAALPISRSFEKVVIANELSSCLHPQHVRPGVAVATLTGTLVTKDNKYTLQPLEFLVEPKAGSEGGDSSTNKGQLSRHLWGTVQLDDFVRSLKKRGITDVNVESSGGEHTIHLPNDDAMILLDRGSTHIITHGNEELRIRIRDALLECVPQF.

It belongs to the metallo-beta-lactamase superfamily. RNA-metabolizing metallo-beta-lactamase-like family. INTS9 subfamily. In terms of assembly, component of the Integrator complex. The core complex associates with protein phosphatase 2A subunits, to form the Integrator-PP2A (INTAC) complex.

Its subcellular location is the nucleus. The protein resides in the cytoplasm. Its function is as follows. Component of the integrator complex, a multiprotein complex that terminates RNA polymerase II (Pol II) transcription in the promoter-proximal region of genes. The integrator complex provides a quality checkpoint during transcription elongation by driving premature transcription termination of transcripts that are unfavorably configured for transcriptional elongation: the complex terminates transcription by (1) catalyzing dephosphorylation of the C-terminal domain (CTD) of Pol II subunit polr2a, (2) degrading the exiting nascent RNA transcript via endonuclease activity and (3) promoting the release of Pol II from bound DNA. The integrator complex is also involved in terminating the synthesis of non-coding Pol II transcripts, such as enhancer RNAs (eRNAs), small nuclear RNAs (snRNAs), telomerase RNAs and long non-coding RNAs (lncRNAs). This is Integrator complex subunit 9 homolog (ints9) from Nematostella vectensis (Starlet sea anemone).